The following is a 302-amino-acid chain: O-antigen biosynthesis glycosyltransferase WbnK (302 aa).

It belongs to the glycosyltransferase 11 family.

It catalyses the reaction beta-D-Gal-(1-&gt;3)-alpha-D-GalNAc-(1-&gt;3)-alpha-D-GalNAc-di-trans,octa-cis-undecaprenyl diphosphate + GDP-beta-L-fucose = alpha-L-Fuc-(1-&gt;2)-beta-D-Gal-(1-&gt;3)-alpha-D-GalNAc-(1-&gt;3)-alpha-D-GalNAc-di-trans,octa-cis-undecaprenyl diphosphate + GDP + H(+). It functions in the pathway bacterial outer membrane biogenesis; LPS O-antigen biosynthesis. Functionally, involved in the assembly of the O-repeating unit during O-antigen biosynthesis. This chain is O-antigen biosynthesis glycosyltransferase WbnK, found in Escherichia coli.